Consider the following 322-residue polypeptide: UDP-N-acetylenolpyruvoylglucosamine reductase (322 aa).

The FAD-binding PCMH-type domain occupies 36–202; it reads RAGGPAQVLF…TSVLFEGVPG (167 aa). Arginine 182 is a catalytic residue. The active-site Proton donor is the serine 231. The active site involves glutamate 301.

Belongs to the MurB family. The cofactor is FAD.

It localises to the cytoplasm. It catalyses the reaction UDP-N-acetyl-alpha-D-muramate + NADP(+) = UDP-N-acetyl-3-O-(1-carboxyvinyl)-alpha-D-glucosamine + NADPH + H(+). It functions in the pathway cell wall biogenesis; peptidoglycan biosynthesis. In terms of biological role, cell wall formation. This Brucella melitensis biotype 2 (strain ATCC 23457) protein is UDP-N-acetylenolpyruvoylglucosamine reductase.